Reading from the N-terminus, the 268-residue chain is Glutamate racemase (268 aa).

Substrate contacts are provided by residues 14–15 (DS) and 46–47 (YG). Catalysis depends on Cys-78, which acts as the Proton donor/acceptor. A substrate-binding site is contributed by 79-80 (NT). Residue Cys-192 is the Proton donor/acceptor of the active site. Residue 193-194 (TH) coordinates substrate.

It belongs to the aspartate/glutamate racemases family.

It carries out the reaction L-glutamate = D-glutamate. It participates in cell wall biogenesis; peptidoglycan biosynthesis. Its function is as follows. Provides the (R)-glutamate required for cell wall biosynthesis. This Sphingopyxis alaskensis (strain DSM 13593 / LMG 18877 / RB2256) (Sphingomonas alaskensis) protein is Glutamate racemase.